We begin with the raw amino-acid sequence, 534 residues long: Capsid scaffolding protein (534 aa).

Active-site charge relay system residues include His46, Ser114, and His134. Residues 253-272 (EDIISIPKSAFLSMLQSSID) are interaction with pAP. The Nuclear localization signal signature appears at 336-342 (RTGKRKR). 2 disordered regions span residues 337–356 (TGKRKRGAEDDEGHLFPGEE) and 466–524 (GAPP…KIRK). The span at 479–491 (QSIQQQAPETTHT) shows a compositional bias: polar residues. Residues 514-534 (SRSSPKSKIRKMFCEELLNKQ) form an interaction with major capsid protein region.

It belongs to the herpesviridae capsid scaffolding protein family. In terms of assembly, homomultimer. Interacts with major capsid protein. Exists in a monomer-dimer equilibrium with the dimer being the active species. In terms of processing, capsid scaffolding protein is cleaved by assemblin after formation of the spherical procapsid. As a result, the capsid obtains its mature, icosahedral shape. Cleavages occur at two or more sites: release (R-site) and maturation (M-site).

Its subcellular location is the host cytoplasm. The protein localises to the host nucleus. It carries out the reaction Cleaves -Ala-|-Ser- and -Ala-|-Ala- bonds in the scaffold protein.. In terms of biological role, acts as a scaffold protein by binding major capsid protein in the cytoplasm, inducing the nuclear localization of both proteins. Multimerizes in the nucleus such as major capsid protein forms the icosahedral T=16 capsid. Autocatalytic cleavage releases the assembly protein, and subsequently abolishes interaction with major capsid protein. Cleavages products are evicted from the capsid before or during DNA packaging. Functionally, protease that plays an essential role in virion assembly within the nucleus. Catalyzes the cleavage of the assembly protein after formation of the spherical procapsid. By that cleavage, the capsid matures and gains its icosahedral shape. The cleavage sites seem to include -Ala-Ser-, -Ala-Ala-, as well as Ala-Thr bonds. Assemblin and cleavages products are evicted from the capsid before or during DNA packaging. Its function is as follows. Plays a major role in capsid assembly. Acts as a scaffold protein by binding major capsid protein. Multimerizes in the nucleus such as major capsid protein forms the icosahedral T=16 capsid. Cleaved by assemblin after capsid completion. The cleavages products are evicted from the capsid before or during DNA packaging. The chain is Capsid scaffolding protein (ORF17) from Human herpesvirus 8 type P (isolate GK18) (HHV-8).